Reading from the N-terminus, the 701-residue chain is Rab-like protein 6 (701 aa).

Met-1 is subject to N-acetylmethionine. Residues 39-279 are small GTPase-like; sequence GVQYNMKIVI…IFLEMMEARS (241 aa). GTP is bound by residues 50–57, 100–104, and 177–179; these read GDRNTGKT, DVVDK, and YRD. Residues 279–701 form a disordered region; the sequence is SRGHASPLTT…LRGGGDYEAL (423 aa). Over residues 284-315 the composition is skewed to low complexity; that stretch reads SPLTTSGQSPSSGSQSPVVPPSTVSTGSSSPS. The span at 316–344 shows a compositional bias: pro residues; that stretch reads TPQPVLQPPLQAPPAPPAPAEAPPLPAAP. A phosphoserine mark is found at Ser-394, Ser-416, Ser-418, Ser-461, and Ser-462. A compositionally biased stretch (low complexity) spans 495-506; sequence ALGPPRDAAPRA. Ser-552 is subject to Phosphoserine. Basic and acidic residues predominate over residues 555–569; the sequence is DAQRRAGEFPVREDL. Position 570 is a phosphoserine (Ser-570). Thr-573 is subject to Phosphothreonine. Residues 580–589 show a composition bias toward pro residues; the sequence is VQPPAPPKPL. Basic and acidic residues predominate over residues 608–626; it reads EPGREDSSEQDKEGRPPAK. Ser-614 and Ser-615 each carry phosphoserine. Residues 629–667 are interaction with CDKN2A; the sequence is KKKKKKGREEEDKAAKKRSKHKKSRERADDKGRDERRRR. A compositionally biased stretch (basic residues) spans 643-653; it reads AKKRSKHKKSR. Residues 654–665 show a composition bias toward basic and acidic residues; sequence ERADDKGRDERR. Over residues 683–701 the composition is skewed to gly residues; sequence LGGGAPSGPLRGGGDYEAL.

This sequence belongs to the small GTPase superfamily. Rab family.

Its subcellular location is the nucleus. It is found in the cytoplasm. In terms of biological role, may enhance cellular proliferation. May reduce growth inhibitory activity of CDKN2A. This chain is Rab-like protein 6 (RABL6), found in Bos taurus (Bovine).